Consider the following 84-residue polypeptide: CLAVATA3/ESR (CLE)-related protein 13 (84 aa).

An N-terminal signal peptide occupies residues 1-29; the sequence is MGRYTTDQVQVYVLVIVLCTFFSTLQARS. Positions 57 to 84 are disordered; the sequence is KQVRDISGDRLSPAGPDPQHNGRSPPRK. Hydroxyproline occurs at positions 69 and 72. P72 carries O-linked (Ara...) hydroxyproline glycosylation.

Belongs to the CLV3/ESR signal peptide family. The O-glycosylation (arabinosylation) of the hydroxyproline Pro-72 enhances binding affinity of the CLE13p peptide for its receptor. In terms of tissue distribution, expressed in young nodules throughout the central tissue. Expressed in the apical region of elongated nodules, corresponding to the meristematic and early infection zones.

Its subcellular location is the secreted. It localises to the extracellular space. In terms of biological role, signaling peptide involved in the regulation of nodulation. Moves from root to shoot to function with the receptor kinase SUNN, in a signaling pathway that plays roles during cellular differentiation, both at the onset of nodulation, and later during nodule meristem development and subsequent homeostasis. Interacts with SUNN signaling to control nodule numbers. SUNN is involved in the autoregulation of nodulation (AON), a long distance systemic signaling from root to shoot and back again, which allows legumes to limit the number of root nodules formed based on available nitrogen and previous rhizobial colonization. The sequence is that of CLAVATA3/ESR (CLE)-related protein 13 from Medicago truncatula (Barrel medic).